The sequence spans 165 residues: Type IV major pilin protein PilE1 (165 aa).

The propeptide at 1–7 (MNTLQKG) is leader sequence. An N-methylphenylalanine modification is found at Phe8. The helical transmembrane segment at 8–28 (FTLIELMIVIAIVGILAAVAL) threads the bilayer. O-linked (DADDGlc) serine glycosylation is present at Ser70. Ser75 carries the O-(2-aminoethylphosphoryl)serine; alternate modification. Ser75 is modified (O-(2-cholinephosphoryl)serine; alternate). Position 75 is a phosphoserine; alternate (Ser75). Ser101 bears the O-(sn-1-glycerophosphoryl)serine; partial mark. Cys128 and Cys158 are disulfide-bonded. Residues 137–153 (DDTVADAKDGKEIDTKH) show a composition bias toward basic and acidic residues. The interval 137-165 (DDTVADAKDGKEIDTKHLPSTCRDNFDAK) is disordered.

It belongs to the N-Me-Phe pilin family. In terms of assembly, the pili are polar flexible filaments of about 5.4 nanometers diameter and 2.5 micrometers average length; they consist of only a single polypeptide chain arranged in a helical configuration of five subunits per turn in the assembled pilus. In terms of processing, the O-linked glycan identified as Gal-GlcNAc disaccharide in PubMed:7477282 and PubMed:10048019 is now identified as either a hexosyl-diacetamidotrideoxyhexoside (DATDHex) by mass spectrometry in PubMed:15249686, or alpha-D-galactopyranosyl-(1-&gt;3)-2,4-diacetamido-2,4-dideoxy-beta-D-glucopyranoside (DADDGlc) by X-ray diffraction in PubMed:16949362. It is not clear whether there is a chemical difference in the glycosylation of the two derivatives of strain MS11 used in these experiments, or not. In some MS11 derivative strains, Ser-75 is modified to O-(2-aminoethylphosphoryl)serine, and in some other derivatives that can be secondarily modified to O-(2-cholinephosphoryl)serine by N-methylation.

The protein localises to the fimbrium. Its subcellular location is the membrane. Functionally, major component of the type IV pilus (T4P) that plays a role in cellular adherence, microcolony formation, resistance to neutrophil mediated killing, twitching motility as well as transformation. Mediates the attachment and the formation of bacterial microcolonies on host epithelial cells. Mechanistically, pili retractation induces host NF-kappa-B activation in infected cells, which is temporally associated with the formation of gonococcal microcolonies. This chain is Type IV major pilin protein PilE1 (pilE1), found in Neisseria gonorrhoeae.